Consider the following 185-residue polypeptide: Ribosome-recycling factor (185 aa).

Belongs to the RRF family.

It is found in the cytoplasm. Its function is as follows. Responsible for the release of ribosomes from messenger RNA at the termination of protein biosynthesis. May increase the efficiency of translation by recycling ribosomes from one round of translation to another. This is Ribosome-recycling factor from Mycobacterium leprae (strain Br4923).